The primary structure comprises 632 residues: MKGINGAKRVRHDASPSAQDGYVTPEKRVKRWSGGQTAANYREWDVEEVCLFLASHGLGELEVIFRENKIKGRILEYLTDSHLKDLQISSVALRLDLLSCLRMLCQNSPSIMKVFNDPIHGHIELHPLLVRIIDTPEFQRLRYIKQLGGSYYVFPGASHNRFEHSIGVGYLAGCLVQALHERQPDLQIDMRDMLCVQIAGLCHDLGHGPFSHMFDGRFMPLACPQKKFKHESASVAMFDHLIQSNGLEEAMKENGLCLPDDLTFIKEQIAGPLSSEAEQQFNSSPNSSSWPYRGRTEEKSFLYEIVANKRNGIDVDKWDYFARDCHHLGIQNNFDYKRFLKFARVCEVGSKKHICTRDKEVGNLYDMFHTRNCLHRRAYQHKVGNIIETMITDAFVKADPHIKIEGANGKYYSISGSVDDMVAYTKLTDNIYHQILYSNDPNLKEAREILQKVERRHLYKYIGQTHPHSNSRIEPDKYDKLPADLASSVPQTSAKDVELHAEDFIVDVIHMDYGMKEQNPINNVRFYCKADPRKAIKIRRDQVSQLLPEKFAEQIIRVYCKKTDEKSLETAKRYFIQWCMNKDFSKPQDGDVVAPDMTPLKASWVDDDDDEDNEGKQQTELLHKSRVKLFTN.

Residues Met1 to Tyr22 form a disordered region. In terms of domain architecture, SAM spans Trp44–Asn107. GTP is bound by residues Lys113 and Val114. Residue Asn116 coordinates dGTP. Asp134, Gln139, and Arg142 together coordinate GTP. Residues Gln146, Leu147, Val153, and Arg161 each contribute to the dGTP site. Gln146 is a dATP binding site. Gln146 provides a ligand contact to dCTP. Gln146 provides a ligand contact to dTTP. Arg161 provides a ligand contact to dATP. A dCTP-binding site is contributed by Arg161. Arg161 is a dTTP binding site. Residues Arg161–Phe321 enclose the HD domain. Mn(2+) contacts are provided by His164, His203, and Asp204. Positions 207 and 212 each coordinate dATP. DCTP contacts are provided by His207 and His212. Residues His207 and His212 each contribute to the dTTP site. His230 is an active-site residue. Position 316 (Asp316) interacts with Mn(2+). 12 residues coordinate dGTP: Lys317, Tyr320, Asp324, Arg338, Arg357, Lys359, Asn363, Arg371, Tyr379, Gln380, His381, and Lys382. DATP contacts are provided by Lys317, Tyr320, and Asp324. DCTP is bound by residues Lys317, Tyr320, and Asp324. DTTP-binding residues include Lys317, Tyr320, and Asp324. Arg371 serves as a coordination point for dATP. Residue Arg371 coordinates dCTP. A dATP-binding site is contributed by Gln380. Gln380 lines the dCTP pocket. Gln380 lines the dTTP pocket. GTP-binding residues include Arg456, Lys460, and Lys529. Residue Lys529 participates in dGTP binding.

This sequence belongs to the SAMHD1 family. As to quaternary structure, homodimer; in absence of GTP and dNTP. Homotetramer; in GTP- and dNTP-bound form. Interacts with rbbp8/CtIP. Requires Zn(2+) as cofactor.

It is found in the nucleus. The protein localises to the chromosome. The catalysed reaction is a 2'-deoxyribonucleoside 5'-triphosphate + H2O = a 2'-deoxyribonucleoside + triphosphate + H(+). It carries out the reaction dATP + H2O = 2'-deoxyadenosine + triphosphate + H(+). The enzyme catalyses dCTP + H2O = 2'-deoxycytidine + triphosphate + H(+). It catalyses the reaction dGTP + H2O = 2'-deoxyguanosine + triphosphate + H(+). The catalysed reaction is dTTP + H2O = thymidine + triphosphate + H(+). With respect to regulation, allosterically activated and regulated via the combined actions of GTP and dNTPs (dATP, dGTP, dTTP and dCTP): Allosteric site 1 binds GTP, while allosteric site 2 binds dNTP. Allosteric activation promotes the formation of highly active homotetramers. Protein that acts both as a host restriction factor involved in defense response to virus and as a regulator of DNA end resection at stalled replication forks. Has deoxynucleoside triphosphate (dNTPase) activity, which is required to restrict infection by viruses: dNTPase activity reduces cellular dNTP levels to levels too low for retroviral reverse transcription to occur, blocking early-stage virus replication in dendritic and other myeloid cells. Functions during S phase at stalled DNA replication forks to promote the resection of gapped or reversed forks: acts by stimulating the exonuclease activity of mre11, activating the ATR-CHK1 pathway and allowing the forks to restart replication. Ability to promote DNA end resection at stalled replication forks is independent of dNTPase activity. This chain is Deoxynucleoside triphosphate triphosphohydrolase SAMHD1, found in Xenopus laevis (African clawed frog).